Reading from the N-terminus, the 441-residue chain is Putative cytochrome P450 138 (441 aa).

Residue Cys-388 participates in heme binding.

This sequence belongs to the cytochrome P450 family. Requires heme as cofactor.

In Mycobacterium bovis (strain ATCC BAA-935 / AF2122/97), this protein is Putative cytochrome P450 138 (cyp138).